The following is a 316-amino-acid chain: tRNA dimethylallyltransferase (316 aa).

Position 17 to 24 (17 to 24 (GPTASGKT)) interacts with ATP. 19–24 (TASGKT) is a binding site for substrate. Interaction with substrate tRNA stretches follow at residues 42 to 45 (DSVL), 166 to 170 (QRLSR), 247 to 252 (RCVGYR), and 280 to 287 (KRQITWLR).

Belongs to the IPP transferase family. In terms of assembly, monomer. Requires Mg(2+) as cofactor.

The catalysed reaction is adenosine(37) in tRNA + dimethylallyl diphosphate = N(6)-dimethylallyladenosine(37) in tRNA + diphosphate. Functionally, catalyzes the transfer of a dimethylallyl group onto the adenine at position 37 in tRNAs that read codons beginning with uridine, leading to the formation of N6-(dimethylallyl)adenosine (i(6)A). The polypeptide is tRNA dimethylallyltransferase (Shigella flexneri).